The primary structure comprises 342 residues: Ribosomal RNA small subunit methyltransferase C (342 aa).

The protein belongs to the methyltransferase superfamily. RsmC family. Monomer.

The protein resides in the cytoplasm. The catalysed reaction is guanosine(1207) in 16S rRNA + S-adenosyl-L-methionine = N(2)-methylguanosine(1207) in 16S rRNA + S-adenosyl-L-homocysteine + H(+). Its function is as follows. Specifically methylates the guanine in position 1207 of 16S rRNA in the 30S particle. The polypeptide is Ribosomal RNA small subunit methyltransferase C (Salmonella gallinarum (strain 287/91 / NCTC 13346)).